The primary structure comprises 278 residues: uncharacterized protein (278 aa).

Residues 1–11 are compositionally biased toward basic and acidic residues; it reads MMIHIHQDKKM. Disordered stretches follow at residues 1 to 107 and 206 to 278; these read MMIH…RYFK and KVSA…KASR. The span at 62-94 shows a compositional bias: low complexity; the sequence is KQSGGKNAKSGSKSAKSGSKSAKSGSKTSKTQS. The segment covering 97 to 107 has biased composition (basic and acidic residues); sequence KGDESRDRYFK. Residues 249 to 260 are compositionally biased toward polar residues; that stretch reads SAKNAKSTGNKK. Residues 264–278 show a composition bias toward low complexity; that stretch reads KSAGAKKAPAAKASR.

This is an uncharacterized protein from Acanthamoeba polyphaga mimivirus (APMV).